We begin with the raw amino-acid sequence, 880 residues long: Valine--tRNA ligase (880 aa).

The short motif at 46 to 56 (PNVTGKLHLGH) is the 'HIGH' region element. Residues 520-524 (KMSKS) carry the 'KMSKS' region motif. Residue K523 participates in ATP binding. Residues 808-880 (LAGLINIEEE…KARIAELKEN (73 aa)) are a coiled coil.

This sequence belongs to the class-I aminoacyl-tRNA synthetase family. ValS type 1 subfamily. As to quaternary structure, monomer.

It is found in the cytoplasm. It carries out the reaction tRNA(Val) + L-valine + ATP = L-valyl-tRNA(Val) + AMP + diphosphate. Functionally, catalyzes the attachment of valine to tRNA(Val). As ValRS can inadvertently accommodate and process structurally similar amino acids such as threonine, to avoid such errors, it has a 'posttransfer' editing activity that hydrolyzes mischarged Thr-tRNA(Val) in a tRNA-dependent manner. The polypeptide is Valine--tRNA ligase (Lactococcus lactis subsp. lactis (strain IL1403) (Streptococcus lactis)).